The sequence spans 538 residues: Syncytin-1 (538 aa).

The N-terminal stretch at methionine 1 to threonine 20 is a signal peptide. Residues alanine 21–glutamine 443 lie on the Extracellular side of the membrane. Asparagine 169 carries an N-linked (GlcNAc...) asparagine glycan. The CXXC motif lies at cysteine 186–cysteine 189. 3 disulfide bridges follow: cysteine 186/cysteine 189, cysteine 186/cysteine 405, and cysteine 397/cysteine 404. N-linked (GlcNAc...) asparagine glycosylation is found at asparagine 208, asparagine 214, asparagine 234, asparagine 242, and asparagine 281. Positions isoleucine 320–isoleucine 340 are fusion peptide. Residues leucine 380–threonine 396 are immunosuppression. The short motif at cysteine 397–cysteine 405 is the CX6CC element. The N-linked (GlcNAc...) asparagine glycan is linked to asparagine 409. The helical transmembrane segment at tryptophan 444 to phenylalanine 464 threads the bilayer. An essential for the fusiogenic function region spans residues glycine 465 to lysine 484. Residues glycine 465–serine 538 lie on the Cytoplasmic side of the membrane. A disordered region spans residues lysine 496–serine 538.

Belongs to the gamma type-C retroviral envelope protein family. HERV class-I W env subfamily. As to quaternary structure, the mature envelope protein (Env) consists of a trimer of SU-TM heterodimers attached probably by a labile interchain disulfide bond. Interacts with the C-type lectin CD209/DC-SIGN. Post-translationally, specific enzymatic cleavages in vivo yield mature proteins. Envelope glycoproteins are synthesized as an inactive precursor that is heavily N-glycosylated and processed likely by furin in the Golgi to yield the mature SU and TM proteins. The cleavage site between SU and TM requires the minimal sequence [KR]-X-[KR]-R. In terms of processing, the CXXC motif is highly conserved across a broad range of retroviral envelope proteins. It is thought to participate in the formation of a labile disulfide bond possibly with the CX6CC motif present in the transmembrane protein.

It is found in the cell membrane. The protein resides in the virion. This endogenous retroviral envelope protein has retained its original fusogenic properties and participates in trophoblast fusion and the formation of a syncytium during placenta morphogenesis. May recognize and induce fusion through binding of SLC1A4 and SLC1A5. Its function is as follows. Endogenous envelope proteins may have kept, lost or modified their original function during evolution. Retroviral envelope proteins mediate receptor recognition and membrane fusion during early infection. The surface protein (SU) mediates receptor recognition, while the transmembrane protein (TM) acts as a class I viral fusion protein. The protein may have at least 3 conformational states: pre-fusion native state, pre-hairpin intermediate state, and post-fusion hairpin state. During viral and target cell membrane fusion, the coiled coil regions (heptad repeats) assume a trimer-of-hairpins structure, positioning the fusion peptide in close proximity to the C-terminal region of the ectodomain. The formation of this structure appears to drive apposition and subsequent fusion of membranes. This Pan troglodytes (Chimpanzee) protein is Syncytin-1 (ERVW-1).